The following is a 415-amino-acid chain: N-succinylarginine dihydrolase (415 aa).

Residues 18 to 27, Asn-100, and 127 to 128 each bind substrate; these read AGLSRGNIAS and HR. Glu-161 is an active-site residue. Position 193 (Arg-193) interacts with substrate. His-229 is a catalytic residue. Substrate is bound by residues Asp-231 and Asn-340. The active-site Nucleophile is the Cys-346.

This sequence belongs to the succinylarginine dihydrolase family. As to quaternary structure, homodimer.

The catalysed reaction is N(2)-succinyl-L-arginine + 2 H2O + 2 H(+) = N(2)-succinyl-L-ornithine + 2 NH4(+) + CO2. It functions in the pathway amino-acid degradation; L-arginine degradation via AST pathway; L-glutamate and succinate from L-arginine: step 2/5. Its function is as follows. Catalyzes the hydrolysis of N(2)-succinylarginine into N(2)-succinylornithine, ammonia and CO(2). The chain is N-succinylarginine dihydrolase from Sphingopyxis alaskensis (strain DSM 13593 / LMG 18877 / RB2256) (Sphingomonas alaskensis).